A 260-amino-acid polypeptide reads, in one-letter code: Phosphatidate cytidylyltransferase (260 aa).

The next 7 membrane-spanning stretches (helical) occupy residues 9 to 29 (IIALIVFLPILLKGGLVLMIF), 46 to 66 (MIKFVSVPGLISAVGLIIIML), 70 to 90 (AGPWVQVIQLKSLIAMSFIVL), 102 to 122 (FMDAAFCLMSVAYVGIGFMFF), 130 to 150 (LHYILYAFLIVWLTDTGAYLF), 172 to 192 (FIGGLFCSLIVPLAMLYFVDF), and 196 to 216 (VWILLGVTLILSLFGQLGDLV).

The protein belongs to the CDS family.

It localises to the cell membrane. It catalyses the reaction a 1,2-diacyl-sn-glycero-3-phosphate + CTP + H(+) = a CDP-1,2-diacyl-sn-glycerol + diphosphate. It functions in the pathway phospholipid metabolism; CDP-diacylglycerol biosynthesis; CDP-diacylglycerol from sn-glycerol 3-phosphate: step 3/3. This chain is Phosphatidate cytidylyltransferase (cdsA), found in Staphylococcus aureus (strain COL).